The chain runs to 288 residues: Pantothenate synthetase (288 aa).

27–34 (MGALHEGH) lines the ATP pocket. The active-site Proton donor is His-34. Positions 58 and 150 each coordinate (R)-pantoate. Gln-58 serves as a coordination point for beta-alanine. Residues Leu-173 and 181–184 (YSSR) contribute to the ATP site.

It belongs to the pantothenate synthetase family. As to quaternary structure, homodimer.

The protein localises to the cytoplasm. The catalysed reaction is (R)-pantoate + beta-alanine + ATP = (R)-pantothenate + AMP + diphosphate + H(+). It functions in the pathway cofactor biosynthesis; (R)-pantothenate biosynthesis; (R)-pantothenate from (R)-pantoate and beta-alanine: step 1/1. Functionally, catalyzes the condensation of pantoate with beta-alanine in an ATP-dependent reaction via a pantoyl-adenylate intermediate. This chain is Pantothenate synthetase, found in Tropheryma whipplei (strain TW08/27) (Whipple's bacillus).